The following is a 378-amino-acid chain: GTPase Obg (378 aa).

The Obg domain maps to methionine 1–leucine 159. Residues alanine 160 to aspartate 336 enclose the OBG-type G domain. GTP-binding positions include glycine 166 to serine 173, phenylalanine 191 to histidine 195, aspartate 213 to glycine 216, asparagine 288 to aspartate 291, and serine 317 to leucine 319. Residues serine 173 and threonine 193 each coordinate Mg(2+). The segment at alanine 345 to glutamate 378 is disordered.

This sequence belongs to the TRAFAC class OBG-HflX-like GTPase superfamily. OBG GTPase family. As to quaternary structure, monomer. Mg(2+) serves as cofactor.

Its subcellular location is the cytoplasm. An essential GTPase which binds GTP, GDP and possibly (p)ppGpp with moderate affinity, with high nucleotide exchange rates and a fairly low GTP hydrolysis rate. Plays a role in control of the cell cycle, stress response, ribosome biogenesis and in those bacteria that undergo differentiation, in morphogenesis control. The protein is GTPase Obg of Bordetella petrii (strain ATCC BAA-461 / DSM 12804 / CCUG 43448).